The primary structure comprises 518 residues: Cytochrome P450 monooxygenase pyr3 (518 aa).

The chain crosses the membrane as a helical span at residues 26–46 (GVAIVLFLAPLALHLVSSYLF). A heme-binding site is contributed by C458.

It belongs to the cytochrome P450 family. Heme is required as a cofactor.

It localises to the membrane. It participates in secondary metabolite biosynthesis; terpenoid biosynthesis. Its function is as follows. Cytochrome P450 monooxygenase; part of the gene cluster that mediates the biosynthesis of pyripyropene A, a specific human acyl-coenzyme A:cholesterol acyltransferase 2 inhibitor. The first step of the pathway is the synthesis of nicotinyl-CoA from nicotinic acid by the nicotinic acid-CoA ligase pyr1. Nicotinyl-CoA is then a substrate of polyketide synthase pyr2 to produce 4-hydroxy-6-(3-pyridinyl)-2H-pyran-2-one (HPPO) which is further prenylated by the polyprenyl transferase pyr6 to yield farnesyl-HPPO. The next steps consist of an epoxidation of farnesyl-HPPO to epoxyfarnesyl-HPPO by FAD-dependent monooxygenase pyr5 and a cyclization of the terpenoid portion by the terpene cyclase pyr4 to yield deacetyl-pyripyropene E. The 2 cytochrome P450 monooxygenases pyr3 and pyr9, and the 2 acetyltransferases pyr7 and pyr8 are involved in the conversion of deacetyl-pyripyropene E into pyripyropene A through several cycles of oxidation and acetylation steps. Pyr7 acetylates deacetyl-pyripyropene E to pyripyropene E which is oxidized to 11-deacetyl-pyripyropene O by pyr3, which is in turn acetylated into pyripyropene O by pyr8. Pyripyropene O is then oxidized to deacetyl-pyripyropene A by pyr9. Deacetyl-pyripyropene A is finally acetylated to pyripyropene A by pyr8. This chain is Cytochrome P450 monooxygenase pyr3, found in Aspergillus fumigatus (strain ATCC MYA-4609 / CBS 101355 / FGSC A1100 / Af293) (Neosartorya fumigata).